The primary structure comprises 264 residues: 3-methyl-2-oxobutanoate hydroxymethyltransferase 2 (264 aa).

Residues Asp44 and Asp83 each coordinate Mg(2+). Residues Asp44 to Ser45, Asp83, and Lys111 contribute to the 3-methyl-2-oxobutanoate site. Glu113 lines the Mg(2+) pocket. Glu180 (proton acceptor) is an active-site residue.

It belongs to the PanB family. In terms of assembly, homodecamer; pentamer of dimers. Requires Mg(2+) as cofactor.

The protein localises to the cytoplasm. The catalysed reaction is 3-methyl-2-oxobutanoate + (6R)-5,10-methylene-5,6,7,8-tetrahydrofolate + H2O = 2-dehydropantoate + (6S)-5,6,7,8-tetrahydrofolate. The protein operates within cofactor biosynthesis; (R)-pantothenate biosynthesis; (R)-pantoate from 3-methyl-2-oxobutanoate: step 1/2. Its function is as follows. Catalyzes the reversible reaction in which hydroxymethyl group from 5,10-methylenetetrahydrofolate is transferred onto alpha-ketoisovalerate to form ketopantoate. The protein is 3-methyl-2-oxobutanoate hydroxymethyltransferase 2 of Hahella chejuensis (strain KCTC 2396).